The chain runs to 185 residues: MADQAYEPRLKTVYRERIRAAMKEQFGYTNEMQIPKLDKIVLNMGIGEAVADSKKAQTALKDLQAIAGQKPVATKARKSIAGFKLREGMVVGAKVTLRKDRMYEFLDRLVTIALPRVKDFRGLNGKSFDGRGNYAMGLKEHLVFPEINYDQIEQIWGMDIIVCTTAKSDQEAKALLKEFQFPFVN.

This sequence belongs to the universal ribosomal protein uL5 family. As to quaternary structure, part of the 50S ribosomal subunit; part of the 5S rRNA/L5/L18/L25 subcomplex. Contacts the 5S rRNA and the P site tRNA. Forms a bridge to the 30S subunit in the 70S ribosome.

This is one of the proteins that bind and probably mediate the attachment of the 5S RNA into the large ribosomal subunit, where it forms part of the central protuberance. In the 70S ribosome it contacts protein S13 of the 30S subunit (bridge B1b), connecting the 2 subunits; this bridge is implicated in subunit movement. Contacts the P site tRNA; the 5S rRNA and some of its associated proteins might help stabilize positioning of ribosome-bound tRNAs. The polypeptide is Large ribosomal subunit protein uL5 (Caulobacter vibrioides (strain NA1000 / CB15N) (Caulobacter crescentus)).